The sequence spans 263 residues: Shikimate dehydrogenase (NADP(+)) (263 aa).

Residues 16 to 18 (SKS) and T65 each bind shikimate. Residue K69 is the Proton acceptor of the active site. Residues N90 and D105 each contribute to the shikimate site. NADP(+) contacts are provided by residues 125 to 129 (GSGGS) and L208. Shikimate is bound at residue Y210. G230 lines the NADP(+) pocket.

This sequence belongs to the shikimate dehydrogenase family. As to quaternary structure, homodimer.

The catalysed reaction is shikimate + NADP(+) = 3-dehydroshikimate + NADPH + H(+). It functions in the pathway metabolic intermediate biosynthesis; chorismate biosynthesis; chorismate from D-erythrose 4-phosphate and phosphoenolpyruvate: step 4/7. Its function is as follows. Involved in the biosynthesis of the chorismate, which leads to the biosynthesis of aromatic amino acids. Catalyzes the reversible NADPH linked reduction of 3-dehydroshikimate (DHSA) to yield shikimate (SA). The chain is Shikimate dehydrogenase (NADP(+)) from Helicobacter pylori (strain P12).